The primary structure comprises 298 residues: Homoserine kinase (298 aa).

ATP is bound at residue 85–95; sequence PMGGLGSSAAS.

Belongs to the GHMP kinase family. Homoserine kinase subfamily.

The protein localises to the cytoplasm. It catalyses the reaction L-homoserine + ATP = O-phospho-L-homoserine + ADP + H(+). It participates in amino-acid biosynthesis; L-threonine biosynthesis; L-threonine from L-aspartate: step 4/5. Functionally, catalyzes the ATP-dependent phosphorylation of L-homoserine to L-homoserine phosphate. In Methanopyrus kandleri (strain AV19 / DSM 6324 / JCM 9639 / NBRC 100938), this protein is Homoserine kinase.